A 45-amino-acid chain; its full sequence is Photosystem II reaction center protein K (45 aa).

The propeptide occupies Met-1–Ala-8. The helical transmembrane segment at Ile-23–Gly-43 threads the bilayer.

The protein belongs to the PsbK family. PSII is composed of 1 copy each of membrane proteins PsbA, PsbB, PsbC, PsbD, PsbE, PsbF, PsbH, PsbI, PsbJ, PsbK, PsbL, PsbM, PsbT, PsbX, PsbY, PsbZ, Psb30/Ycf12, at least 3 peripheral proteins of the oxygen-evolving complex and a large number of cofactors. It forms dimeric complexes.

The protein localises to the plastid. The protein resides in the cyanelle thylakoid membrane. Functionally, one of the components of the core complex of photosystem II (PSII). PSII is a light-driven water:plastoquinone oxidoreductase that uses light energy to abstract electrons from H(2)O, generating O(2) and a proton gradient subsequently used for ATP formation. It consists of a core antenna complex that captures photons, and an electron transfer chain that converts photonic excitation into a charge separation. The sequence is that of Photosystem II reaction center protein K from Cyanophora paradoxa.